Here is a 444-residue protein sequence, read N- to C-terminus: Maintenance of mitochondrial morphology protein 1 (444 aa).

The Lumenal portion of the chain corresponds to 1–110; the sequence is MNNLDNLAGN…SFSGWSFIEG (110 aa). The chain crosses the membrane as a helical span at residues 111–131; it reads FIIGQFSVIIVLIFFIKFFVF. Topologically, residues 132–444 are cytoplasmic; sequence SDGSSSNSSN…TDDVPLSKAE (313 aa). The region spanning 207–419 is the SMP-LTD domain; that stretch reads PSESLDWFNV…EPRFQCIRLP (213 aa).

It belongs to the MMM1 family. Homodimer. Component of the ER-mitochondria encounter structure (ERMES) or MDM complex, composed of MMM1, MDM10, MDM12 and MDM34. An MMM1 homodimer associates with one molecule of MDM12 on each side in a pairwise head-to-tail manner, and the SMP-LTD domains of MMM1 and MDM12 generate a continuous hydrophobic tunnel for phospholipid trafficking.

The protein resides in the endoplasmic reticulum membrane. Its function is as follows. Component of the ERMES/MDM complex, which serves as a molecular tether to connect the endoplasmic reticulum (ER) and mitochondria. Components of this complex are involved in the control of mitochondrial shape and protein biogenesis, and function in nonvesicular lipid trafficking between the ER and mitochondria. The MDM12-MMM1 subcomplex functions in the major beta-barrel assembly pathway that is responsible for biogenesis of all outer membrane beta-barrel proteins, and acts in a late step after the SAM complex. The MDM10-MDM12-MMM1 subcomplex further acts in the TOM40-specific pathway after the action of the MDM12-MMM1 complex. Essential for establishing and maintaining the structure of mitochondria and maintenance of mtDNA nucleoids. This chain is Maintenance of mitochondrial morphology protein 1, found in Vanderwaltozyma polyspora (strain ATCC 22028 / DSM 70294 / BCRC 21397 / CBS 2163 / NBRC 10782 / NRRL Y-8283 / UCD 57-17) (Kluyveromyces polysporus).